The primary structure comprises 384 residues: 8-amino-7-oxononanoate synthase (384 aa).

Arg21 is a binding site for substrate. A pyridoxal 5'-phosphate-binding site is contributed by 108-109 (GF). Substrate is bound at residue His133. Ser179, His207, and Thr233 together coordinate pyridoxal 5'-phosphate. Lys236 is modified (N6-(pyridoxal phosphate)lysine). Thr352 is a substrate binding site.

This sequence belongs to the class-II pyridoxal-phosphate-dependent aminotransferase family. BioF subfamily. Homodimer. Pyridoxal 5'-phosphate is required as a cofactor.

The catalysed reaction is 6-carboxyhexanoyl-[ACP] + L-alanine + H(+) = (8S)-8-amino-7-oxononanoate + holo-[ACP] + CO2. The protein operates within cofactor biosynthesis; biotin biosynthesis. Functionally, catalyzes the decarboxylative condensation of pimeloyl-[acyl-carrier protein] and L-alanine to produce 8-amino-7-oxononanoate (AON), [acyl-carrier protein], and carbon dioxide. This Escherichia coli O8 (strain IAI1) protein is 8-amino-7-oxononanoate synthase.